Consider the following 462-residue polypeptide: Centrosomal protein of 55 kDa (462 aa).

A compositionally biased stretch (basic and acidic residues) spans 1-11 (MSSRSPKDLIK). Positions 1–26 (MSSRSPKDLIKSKWGSRPSSSKSDTA) are disordered. The span at 12-23 (SKWGSRPSSSKS) shows a compositional bias: low complexity. Residues 50 to 400 (KMAEKGRSRL…TQLESLKQLH (351 aa)) are a coiled coil. Ser96 and Ser99 each carry phosphoserine. The tract at residues 157-235 (ANCFNSSMNS…EGYLQVEKQK (79 aa)) is interaction with TSG101. Residues 160 to 214 (FNSSMNSIHEKEMQLKDALEKNQQWLVYDQQREAYVKGLLAKIFELEKRTETAAA) are interaction with PDCD6IP. The required for localization to the interphase centrosome and to the midbody during cytokinesis stretch occupies residues 354–462 (QMQACTLDFE…LLVHVEYCMK (109 aa)). A disordered region spans residues 410–430 (PLQREPESRVKATSPKSPSAA). Residues Ser423, Ser426, and Ser428 each carry the phosphoserine modification. Ser434 bears the Phosphoserine; by PLK1 mark.

Homodimer. Interacts (phosphorylated on Ser-423 and Ser-426) with PLK1; the interaction is indirect via the MTMR3:MTMR4 heterooligomer, occurs during early mitosis, regulates the phosphorylation of CEP55 by PLK1 and its recruitment to the midbody where it can mediate cell abscission. Interacts with AKAP9/CG-NAP; the interaction occurs in interphase and is lost upon mitotic entry. Interacts with PCNT/Kendrin; the interaction occurs in interphase and is lost upon mitotic entry. Directly interacts with PDCD6IP; this interaction is required for PDCD6IP targeting to the midbody; CEP55 binds PDCD6IP in a 2:1 stoichiometry; PDCD6IP competes with TSG101 for the same binding site. Interacts with TSG101; TSG101 competes with PDCD6IP for the same binding site; interaction is required for cytokinesis. Interacts with MVB12A, VPS37B, VPS37C and VPS28. There is a hierachy of phosphorylation, where both Ser-423 and Ser-426 are phosphorylated at the onset of mitosis, prior to Ser-434. Phosphorylation at Ser-423 and Ser-426 is required for dissociation from the centrosome at the G2/M boundary. Phosphorylation at the 3 sites, Ser-423, Ser-426 and Ser-434, is required for protein function at the final stages of cell division to complete cytokinesis successfully.

Its subcellular location is the cytoplasm. The protein localises to the cytoskeleton. It localises to the microtubule organizing center. It is found in the centrosome. The protein resides in the centriole. Its subcellular location is the cleavage furrow. The protein localises to the midbody. It localises to the midbody ring. Functionally, plays a role in mitotic exit and cytokinesis. Recruits PDCD6IP and TSG101 to midbody during cytokinesis. Required for successful completion of cytokinesis. Not required for microtubule nucleation. Plays a role in the development of the brain and kidney. The protein is Centrosomal protein of 55 kDa of Mus musculus (Mouse).